The following is a 593-amino-acid chain: Kelch-like protein 2 (593 aa).

The interval 1-28 is disordered; the sequence is METPPLPPACTKQGHQKPLDSKDDNTEK. Basic and acidic residues predominate over residues 17 to 28; sequence KPLDSKDDNTEK. The 68-residue stretch at 56–123 folds into the BTB domain; it reads CDVTIVAEDM…VYTAEIQVTE (68 aa). 6 Kelch repeats span residues 308–353, 354–400, 402–447, 449–496, 497–543, and 545–591; these read LMVV…YMAG, LVFA…VLNG, LYAV…VVGG, LYAV…VLNN, LLYA…AVNG, and LYVV…VIDK.

As to quaternary structure, component of the BCR(KLHL2) E3 ubiquitin ligase complex, at least composed of CUL3 and KLHL2 and RBX1. Binds actin. Interacts with KLHL12. Interacts (via N-terminus) with FYN (via SH3 domain). Ubiquitous. Detected throughout the brain.

It is found in the cytoplasm. The protein localises to the cytoskeleton. It localises to the cell projection. The protein resides in the ruffle. Its subcellular location is the lamellipodium. It is found in the cytosol. It functions in the pathway protein modification; protein ubiquitination. Its function is as follows. Substrate-specific adapter of a BCR (BTB-CUL3-RBX1) E3 ubiquitin ligase complex that mediates the ubiquitination of target proteins, such as NPTXR, WNK1, WNK3 and WNK4, leading most often to their proteasomal degradation. The BCR(KLHL2) complex catalyzes ubiquitination and degradation of NPTXR. Responsible for degradative ubiquitination of the WNK kinases WNK1, WNK3 and WNK4. Plays a role in the reorganization of the actin cytoskeleton. Promotes growth of cell projections in oligodendrocyte precursors. This Homo sapiens (Human) protein is Kelch-like protein 2.